The chain runs to 326 residues: Beta-1,3-galactosyltransferase 1 (326 aa).

At 1-6 the chain is on the cytoplasmic side; it reads MASKVS. The chain crosses the membrane as a helical; Signal-anchor for type II membrane protein span at residues 7–26; that stretch reads CLYVLTVVCWASALWYLSIT. Residues 27–326 are Lumenal-facing; that stretch reads RPTSSYTGSK…DMSSKKHLRC (300 aa). Asn47 and Asn151 each carry an N-linked (GlcNAc...) asparagine glycan.

This sequence belongs to the glycosyltransferase 31 family. Requires Mn(2+) as cofactor.

It localises to the golgi apparatus membrane. The enzyme catalyses an N-acetyl-beta-D-glucosaminyl derivative + UDP-alpha-D-galactose = a beta-D-galactosyl-(1-&gt;3)-N-acetyl-beta-D-glucosaminyl derivative + UDP + H(+). It catalyses the reaction a beta-D-GlcNAc-(1-&gt;3)-beta-D-Gal-(1-&gt;4)-beta-D-Glc-(1&lt;-&gt;1)-Cer(d18:1(4E)) + UDP-alpha-D-galactose = a beta-D-Gal-(1-&gt;3)-beta-D-GlcNAc-(1-&gt;3)-beta-D-Gal-(1-&gt;4)-beta-D-Glc-(1&lt;-&gt;1')-Cer(d18:1(4E)) + UDP + H(+). The protein operates within protein modification; protein glycosylation. Its function is as follows. Beta-1,3-galactosyltransferase that transfers galactose from UDP-galactose to substrates with a terminal beta-N-acetylglucosamine (beta-GlcNAc) residue. Involved in the biosynthesis of the carbohydrate moieties of glycolipids and glycoproteins. The protein is Beta-1,3-galactosyltransferase 1 (B3GALT1) of Gorilla gorilla gorilla (Western lowland gorilla).